The following is a 147-amino-acid chain: Transcription antitermination protein NusB (147 aa).

This sequence belongs to the NusB family.

Its function is as follows. Involved in transcription antitermination. Required for transcription of ribosomal RNA (rRNA) genes. Binds specifically to the boxA antiterminator sequence of the ribosomal RNA (rrn) operons. This chain is Transcription antitermination protein NusB, found in Teredinibacter turnerae (strain ATCC 39867 / T7901).